The following is a 270-amino-acid chain: MRTAYYISDGTAITSEVFGHALLSLFTIEFEHITVPFVETEEQAKQVVKKISESFQDDGQRPLVFYTIVNTEVRKIISKSVGINYNFLDQFVAPLEIVLGVPSKPEKHRTHSIHEKTYDIRIEAVNYALANDDGSNLQEYDEADIILVGVSRSGKTPTSLYLALQYGIKAANYPFTEEDMGDILKMPPALKRYKDKMFGLTIEAQRLHQIRSERRANSRYASLQQCRMELREVENLYRKEKIPFLNSTRYSIEEISAKILATTGLQRKKY.

Position 149-156 (149-156 (GVSRSGKT)) interacts with ADP.

Belongs to the pyruvate, phosphate/water dikinase regulatory protein family. PSRP subfamily.

It carries out the reaction [pyruvate, water dikinase] + ADP = [pyruvate, water dikinase]-phosphate + AMP + H(+). The catalysed reaction is [pyruvate, water dikinase]-phosphate + phosphate + H(+) = [pyruvate, water dikinase] + diphosphate. In terms of biological role, bifunctional serine/threonine kinase and phosphorylase involved in the regulation of the phosphoenolpyruvate synthase (PEPS) by catalyzing its phosphorylation/dephosphorylation. This chain is Putative phosphoenolpyruvate synthase regulatory protein, found in Pseudoalteromonas atlantica (strain T6c / ATCC BAA-1087).